We begin with the raw amino-acid sequence, 335 residues long: Heat-inducible transcription repressor HrcA (335 aa).

The protein belongs to the HrcA family.

In terms of biological role, negative regulator of class I heat shock genes (grpE-dnaK-dnaJ and groELS operons). Prevents heat-shock induction of these operons. The polypeptide is Heat-inducible transcription repressor HrcA (Mesomycoplasma hyopneumoniae (strain 232) (Mycoplasma hyopneumoniae)).